The following is a 195-amino-acid chain: dTTP/UTP pyrophosphatase (195 aa).

The Proton acceptor role is filled by aspartate 70.

Belongs to the Maf family. YhdE subfamily. A divalent metal cation is required as a cofactor.

It localises to the cytoplasm. The catalysed reaction is dTTP + H2O = dTMP + diphosphate + H(+). It carries out the reaction UTP + H2O = UMP + diphosphate + H(+). Nucleoside triphosphate pyrophosphatase that hydrolyzes dTTP and UTP. May have a dual role in cell division arrest and in preventing the incorporation of modified nucleotides into cellular nucleic acids. The chain is dTTP/UTP pyrophosphatase from Methanococcoides burtonii (strain DSM 6242 / NBRC 107633 / OCM 468 / ACE-M).